The following is a 265-amino-acid chain: Uridylate kinase (265 aa).

Residues 1–29 form a disordered region; sequence MTESREPHVAGSAAPRPEPANGLASGQPS. 40–43 provides a ligand contact to ATP; the sequence is KLGG. Gly81 contributes to the UMP binding site. 2 residues coordinate ATP: Gly82 and Arg86. UMP contacts are provided by residues Asp101 and 162 to 169; that span reads MGLPYFST. 2 residues coordinate ATP: Phe195 and Asp198.

Belongs to the UMP kinase family. Homohexamer.

The protein resides in the cytoplasm. The catalysed reaction is UMP + ATP = UDP + ADP. It participates in pyrimidine metabolism; CTP biosynthesis via de novo pathway; UDP from UMP (UMPK route): step 1/1. Its activity is regulated as follows. Inhibited by UTP. Its function is as follows. Catalyzes the reversible phosphorylation of UMP to UDP. This Mycolicibacterium paratuberculosis (strain ATCC BAA-968 / K-10) (Mycobacterium paratuberculosis) protein is Uridylate kinase.